A 547-amino-acid chain; its full sequence is Large cysteine-rich periplasmic protein OmcB, serovar C (547 aa).

The first 22 residues, 1-22 (MNKLIRRAVTIFAVTSVASLFA), serve as a signal peptide directing secretion. The propeptide occupies 23 to 40 (SGVLETSMAESLSTNVIS). The interval 45 to 84 (KAKDNTSHKSKKARKNHSKETPVDRKEVAPVHESKATGPK) is disordered. Residues 52–61 (HKSKKARKNH) show a composition bias toward basic residues. The segment covering 62–79 (SKETPVDRKEVAPVHESK) has biased composition (basic and acidic residues).

As to quaternary structure, part of a disulfide cross-linked outer membrane complex (COMC) composed of the major outer membrane porin (MOMP), the small cysteine-rich protein (OmcA) and the large cysteine-rich periplasmic protein (OmcB).

Its subcellular location is the periplasm. In elementary bodies (EBs, the infectious stage, which is able to survive outside the host cell) provides the structural integrity of the outer envelope through disulfide cross-links with the small cysteine-rich protein and the major outer membrane porin. It has been described in publications as the Sarkosyl-insoluble COMC (Chlamydia outer membrane complex), and serves as the functional equivalent of peptidoglycan. The sequence is that of Large cysteine-rich periplasmic protein OmcB, serovar C (omcB) from Chlamydia trachomatis.